The sequence spans 118 residues: Large ribosomal subunit protein bL20 (118 aa).

The protein belongs to the bacterial ribosomal protein bL20 family.

Functionally, binds directly to 23S ribosomal RNA and is necessary for the in vitro assembly process of the 50S ribosomal subunit. It is not involved in the protein synthesizing functions of that subunit. The chain is Large ribosomal subunit protein bL20 from Ectopseudomonas mendocina (strain ymp) (Pseudomonas mendocina).